A 199-amino-acid chain; its full sequence is Ribosome maturation factor RimM (199 aa).

One can recognise a PRC barrel domain in the interval 95-168; the sequence is EDEFYHADLV…FVRVDPVAAG (74 aa). The disordered stretch occupies residues 167–199; that stretch reads AGLVEDEDGDAPREEDFDPKGRPRGPRDAGGNR. Basic and acidic residues predominate over residues 176-193; sequence DAPREEDFDPKGRPRGPR.

This sequence belongs to the RimM family. In terms of assembly, binds ribosomal protein uS19.

Its subcellular location is the cytoplasm. An accessory protein needed during the final step in the assembly of 30S ribosomal subunit, possibly for assembly of the head region. Essential for efficient processing of 16S rRNA. May be needed both before and after RbfA during the maturation of 16S rRNA. It has affinity for free ribosomal 30S subunits but not for 70S ribosomes. The chain is Ribosome maturation factor RimM from Mesorhizobium japonicum (strain LMG 29417 / CECT 9101 / MAFF 303099) (Mesorhizobium loti (strain MAFF 303099)).